The sequence spans 317 residues: NF-kappa-B inhibitor alpha (317 aa).

The segment at 1–39 (MFQAAERPQEWAMEGPRDGLKKERLLDDRHDSGLDSMKD) is disordered. The segment covering 15 to 39 (GPRDGLKKERLLDDRHDSGLDSMKD) has biased composition (basic and acidic residues). A Glycyl lysine isopeptide (Lys-Gly) (interchain with G-Cter in SUMO); alternate cross-link involves residue Lys21. A Glycyl lysine isopeptide (Lys-Gly) (interchain with G-Cter in ubiquitin); alternate cross-link involves residue Lys21. Lys22 is covalently cross-linked (Glycyl lysine isopeptide (Lys-Gly) (interchain with G-Cter in ubiquitin)). The short motif at 30–36 (HDSGLDS) is the Destruction motif element. A Phosphoserine; by IKKA and IKKE modification is found at Ser32. Ser36 carries the phosphoserine; by IKKA, IKKB, IKKE and TBK1 modification. The residue at position 42 (Tyr42) is a Phosphotyrosine; by Tyr-kinases. The short motif at 45-54 (MVKELQEIRL) is the Nuclear export signal element. 5 ANK repeats span residues 73-103 (DGDS…DLAF), 110-139 (LQQT…DPEL), 143-172 (RGNT…TPHL), 182-211 (NGHT…DVNA), and 216-245 (NGRT…DVNR). A Nuclear import signal motif is present at residues 110 to 120 (LQQTPLHLAVI). (3S)-3-hydroxyasparagine; by HIF1AN; partial is present on residues Asn210 and Asn244. A phosphoserine; by CK2 mark is found at Ser283 and Ser288. Thr291 carries the post-translational modification Phosphothreonine; by CK2. The residue at position 293 (Ser293) is a Phosphoserine; by CK2. A Phosphothreonine; by CK2 modification is found at Thr299.

The protein belongs to the NF-kappa-B inhibitor family. As to quaternary structure, interacts with RELA; the interaction requires the nuclear import signal. Part of a 70-90 kDa complex at least consisting of CHUK, IKBKB, NFKBIA, RELA, ELP1 and MAP3K14. Interacts with NKIRAS1 and NKIRAS2. Interacts with isoform 1 and isoform 2 of RWDD3; the interaction enhances sumoylation. Interacts with PRMT2. Interacts with PRKACA in platelets; this interaction is disrupted by thrombin and collagen. Interacts with MEFV. Interacts with DDRGK1; positively regulates NFKBIA phosphorylation and degradation. Interacts with HNRNPA2B1; the interaction may be mediated by the RRM2 domain of HNRNPA2B1, and HNRNPA2B1 may interact simultaneously with FAM76B and either NFKBIA or NFKBIE to form a complex. In terms of assembly, (Microbial infection) Interacts with HBV protein X. Post-translationally, phosphorylated at Ser-32 and Ser-36 by IKKA/CHUK and IKKB/IKBKB; disables inhibition of NF-kappa-B DNA-binding activity. Phosphorylation at positions 32 and 36 is prerequisite to recognition by the SCF(FBXW11) and SCF(BTRC) complexes, leading to polyubiquitination and subsequent degradation. Phosphorylated at Ser-32 in response to FK506 treatment: phosphorylation is independent of IKKA/CHUK and IKKB/IKBKB and promotes NFKBIA degradation, followed by NF-kappa-B activation. Phosphorylated at Tyr-42: its effect is however unclear. According to a report, phosphorylation at Tyr-42 activates NF-kappa-B without triggering proteolytic degradation of NFKBIA. According to another publication, phosphorylation at Tyr-42 inhibits NF-kappa-B activity by preventing phosphorylation at Ser-32 and Ser-36 and subsequent ubiquitination and degradation. In terms of processing, polyubiquitinated at Lys-21 and/or Lys-22 following phosphorylation at Ser-32 and Ser-36. Monoubiquitinated at Lys-21 and/or Lys-22 by UBE2D3. Ubiquitin chain elongation is then performed by CDC34 in cooperation with the SCF(FBXW11) E3 ligase complex, building ubiquitin chains from the UBE2D3-primed NFKBIA-linked ubiquitin. The resulting polyubiquitination leads to protein degradation. Also ubiquitinated by the SCF(BTRC) complex following stimulus-dependent phosphorylation at Ser-32 and Ser-36. Deubiquitinated by USP38, leading to NF-kappa-B inhibition. Sumoylated; sumoylation requires the presence of the nuclear import signal. Sumoylation blocks ubiquitination and proteasome-mediated degradation of the protein thereby increasing the protein stability. Post-translationally, hydroxylated by HIF1AN. In terms of processing, (Microbial infection) Deubiquitinated by porcine reproductive and respiratory syndrome virus Nsp2 protein, which thereby interferes with NFKBIA degradation and impairs subsequent NF-kappa-B activation.

It localises to the cytoplasm. Its subcellular location is the nucleus. Inhibits the activity of dimeric NF-kappa-B/REL complexes by trapping REL (RELA/p65 and NFKB1/p50) dimers in the cytoplasm by masking their nuclear localization signals. On cellular stimulation by immune and pro-inflammatory responses, becomes phosphorylated promoting ubiquitination and degradation, enabling the dimeric RELA to translocate to the nucleus and activate transcription. This chain is NF-kappa-B inhibitor alpha (NFKBIA), found in Homo sapiens (Human).